The following is a 375-amino-acid chain: Peptide-N(4)-(N-acetyl-beta-glucosaminyl)asparagine amidase (375 aa).

Residues Cys-129, Cys-132, Cys-163, and Cys-166 each contribute to the Zn(2+) site. The Nucleophile role is filled by Cys-189. Residues His-219 and Asp-236 contribute to the active site. Glu-239 is a binding site for substrate. Residues 345 to 375 form a disordered region; sequence KIEVSRTHNIPTGRQTGDAEWTKSRGEDGNE. The span at 364–375 shows a compositional bias: basic and acidic residues; sequence EWTKSRGEDGNE.

Belongs to the transglutaminase-like superfamily. PNGase family. Zn(2+) is required as a cofactor.

The protein resides in the cytoplasm. It carries out the reaction Hydrolysis of an N(4)-(acetyl-beta-D-glucosaminyl)asparagine residue in which the glucosamine residue may be further glycosylated, to yield a (substituted) N-acetyl-beta-D-glucosaminylamine and a peptide containing an aspartate residue.. In terms of biological role, specifically deglycosylates the denatured form of N-linked glycoproteins in the cytoplasm and assists their proteasome-mediated degradation. Cleaves the beta-aspartyl-glucosamine (GlcNAc) of the glycan and the amide side chain of Asn, converting Asn to Asp. Prefers proteins containing high-mannose over those bearing complex type oligosaccharides. Can recognize misfolded proteins in the endoplasmic reticulum that are exported to the cytosol to be destroyed and deglycosylate them, while it has no activity toward native proteins. Deglycosylation is a prerequisite for subsequent proteasome-mediated degradation of some, but not all, misfolded glycoproteins. This is Peptide-N(4)-(N-acetyl-beta-glucosaminyl)asparagine amidase (PNG1) from Debaryomyces hansenii (strain ATCC 36239 / CBS 767 / BCRC 21394 / JCM 1990 / NBRC 0083 / IGC 2968) (Yeast).